Here is a 141-residue protein sequence, read N- to C-terminus: MKVRTQMMYDMETLLRKVFKQIRNEINEILDKELSRNEFTILRILSEQGPKKVTEFAPILEVSASHITAVTDALVEKEWITRIRSKEDRRIIRIHITEAGEKVLQHFNEKKTEYFFKRFDCYTDAELATLIELFSKLDKKR.

The HTH marR-type domain occupies R4–K139. Residues V53–E76 constitute a DNA-binding region (H-T-H motif).

This is an uncharacterized protein from Bacillus subtilis (strain 168).